We begin with the raw amino-acid sequence, 281 residues long: 4-diphosphocytidyl-2-C-methyl-D-erythritol kinase (281 aa).

Lys-11 is a catalytic residue. 92 to 102 (LVSAGLAGGSA) is an ATP binding site. Asp-132 is an active-site residue.

The protein belongs to the GHMP kinase family. IspE subfamily.

The catalysed reaction is 4-CDP-2-C-methyl-D-erythritol + ATP = 4-CDP-2-C-methyl-D-erythritol 2-phosphate + ADP + H(+). It participates in isoprenoid biosynthesis; isopentenyl diphosphate biosynthesis via DXP pathway; isopentenyl diphosphate from 1-deoxy-D-xylulose 5-phosphate: step 3/6. Functionally, catalyzes the phosphorylation of the position 2 hydroxy group of 4-diphosphocytidyl-2C-methyl-D-erythritol. This is 4-diphosphocytidyl-2-C-methyl-D-erythritol kinase from Ehrlichia ruminantium (strain Gardel).